We begin with the raw amino-acid sequence, 391 residues long: MEFPETNNNPIITLSFLLCMLSLAYASETCDFPAIFNFGDSNSDTGGKAAAFYPLNPPYGETFFHRSTGRYSDGRLIIDFIAESFNLPYLSPYLSSLGSNFKHGADFATAGSTIKLPTTIIPAHGGFSPFYLDVQYSQFRQFIPRSQFIRETGGIFAELVPEEYYFEKALYTFDIGQNDLTEGFLNLTVEEVNATVPDLVNSFSANVKKIYDLGARTFWIHNTGPIGCLSFILTYFPWAEKDSAGCAKAYNEVAQHFNHKLKEIVAQLRKDLPLATFVHVDIYSVKYSLFSEPEKHGFEFPLITCCGYGGKYNFSVTAPCGDTVTADDGTKIVVGSCACPSVRVNWDGAHYTEAANEYFFDQISTGAFSDPPVPLNMACHKTESLRTLASV.

The signal sequence occupies residues 1-26; sequence MEFPETNNNPIITLSFLLCMLSLAYA. Ser-41 functions as the Nucleophile in the catalytic mechanism. Residues Asn-186, Asn-193, and Asn-313 are each glycosylated (N-linked (GlcNAc...) asparagine). Catalysis depends on residues Asp-347 and His-350.

This sequence belongs to the 'GDSL' lipolytic enzyme family. In terms of processing, the N-terminus is blocked. Post-translationally, glycosylated.

Its function is as follows. Has lipase and esterase activities. May be involved in plant defense. In Hevea brasiliensis (Para rubber tree), this protein is Esterase.